A 1284-amino-acid chain; its full sequence is Putative late blight resistance protein homolog R1B-16 (1284 aa).

Residues 533–555 (PRMNEEIVGFKDVIENLRNQLLN) are a coiled coil. Residues 534-821 (RMNEEIVGFK…SESFIKSSEG (288 aa)) form the NB-ARC domain. Residue 567 to 574 (GMPGLGKT) coordinates ATP. LRR repeat units follow at residues 942-966 (FKFLKVLDLEHQVVIDSIPTELFYL), 985-1010 (LWNLETLILKHVSRCTVLLPSTVWDM), 1013-1036 (LRHLHIPNFRPENEEALLENSAKL), 1085-1107 (PIRLEILKLYRSKAFNTIPFCIS), 1108-1135 (APNLKYLKLSRSYMDSQYLSETADHLKN), 1159-1181 (FPQLKILKLEYLALMKWIVADDA), 1182-1206 (FPNLEQLVLHECRHLMEIPSCFMDI), and 1219-1243 (ESVVKSAMNIQETQVEDYQNTNFKL). Residues 1217-1284 (CNESVVKSAM…VEKQRKRGML (68 aa)) form the HMA domain.

The protein belongs to the disease resistance NB-LRR family.

Its subcellular location is the cytoplasm. The protein localises to the membrane. Confers resistance to late blight (Phytophthora infestans) races carrying the avirulence gene Avr1. Resistance proteins guard the plant against pathogens that contain an appropriate avirulence protein via an indirect interaction with this avirulence protein. That triggers a defense system including the hypersensitive response, which restricts the pathogen growth. The chain is Putative late blight resistance protein homolog R1B-16 (R1B-16) from Solanum demissum (Wild potato).